We begin with the raw amino-acid sequence, 315 residues long: MSQANLEFPESVAAAPRGPYRGRFAPSPTGPLHIGSLVTALASWLDARVHGGTWLVRIEDIDFQRNVPGADRDILASLETLGLVPDEAPQWQSAHLPRFEAALAQLQAIDRLYPCGCTRREIADSITTVDAQGRLRHQTLIYPGTCRNGLMGRPPRAWRVRLPDADAATVCFDDRWQGTQCQNLAEAVGDFVLKRADGMWAYQIAVVVDDAAQGITDVVRGADLLDSTPRQIYLQRLLGLPAVRYLHVPVVVNAAGEKLSKQTGARAINRSQPLAALTEAARHLGLEIRAADMEGFYRAAVPAWAHRLAQLTPAA.

Residues 23 to 27 and E59 contribute to the L-glutamate site; that span reads RFAPS. Residues 26 to 36 carry the 'HIGH' region motif; the sequence is PSPTGPLHIGS. The Zn(2+) site is built by C115, C117, Y142, and C146. 2 residues coordinate L-glutamate: Y202 and R220. The 'KMSKS' region motif lies at 258 to 262; sequence KLSKQ. K261 contributes to the ATP binding site.

It belongs to the class-I aminoacyl-tRNA synthetase family. GluQ subfamily. The cofactor is Zn(2+).

Its function is as follows. Catalyzes the tRNA-independent activation of glutamate in presence of ATP and the subsequent transfer of glutamate onto a tRNA(Asp). Glutamate is transferred on the 2-amino-5-(4,5-dihydroxy-2-cyclopenten-1-yl) moiety of the queuosine in the wobble position of the QUC anticodon. In Ralstonia nicotianae (strain ATCC BAA-1114 / GMI1000) (Ralstonia solanacearum), this protein is Glutamyl-Q tRNA(Asp) synthetase.